A 249-amino-acid polypeptide reads, in one-letter code: Diphthine synthase (249 aa).

S-adenosyl-L-methionine is bound by residues Asp83, Leu86, 111–112 (SI), Leu163, and Leu205.

Belongs to the diphthine synthase family. As to quaternary structure, homodimer.

The enzyme catalyses 2-[(3S)-amino-3-carboxypropyl]-L-histidyl-[translation elongation factor 2] + 3 S-adenosyl-L-methionine = diphthine-[translation elongation factor 2] + 3 S-adenosyl-L-homocysteine + 3 H(+). It participates in protein modification; peptidyl-diphthamide biosynthesis. Its function is as follows. S-adenosyl-L-methionine-dependent methyltransferase that catalyzes the trimethylation of the amino group of the modified target histidine residue in translation elongation factor 2 (EF-2), to form an intermediate called diphthine. The three successive methylation reactions represent the second step of diphthamide biosynthesis. In Pyrobaculum islandicum (strain DSM 4184 / JCM 9189 / GEO3), this protein is Diphthine synthase.